The primary structure comprises 124 residues: MSGRGKSGKARTKAKTRSSRAGLQFPVGRVHRFLRKGNYAKRVGGGAPVYMAAVLEYLTAEILELAGNAARDNKKSRIIPRHLQLAVRNDEELNKLLGGVTIAQGGVLPNIQAVLLPKKTAKSS.

A compositionally biased stretch (basic residues) spans 1–18 (MSGRGKSGKARTKAKTRS). The segment at 1 to 21 (MSGRGKSGKARTKAKTRSSRA) is disordered. Ser-2 carries the post-translational modification N-acetylserine. Ser-2 bears the Phosphoserine mark. Residue Gln-104 is modified to N5-methylglutamine. Lys-119 participates in a covalent cross-link: Glycyl lysine isopeptide (Lys-Gly) (interchain with G-Cter in ubiquitin).

Belongs to the histone H2A family. As to quaternary structure, the nucleosome is a histone octamer containing two molecules each of H2A, H2B, H3 and H4 assembled in one H3-H4 heterotetramer and two H2A-H2B heterodimers. The octamer wraps approximately 147 bp of DNA. Monoubiquitination of Lys-119 gives a specific tag for epigenetic transcriptional repression. In terms of processing, phosphorylation of Ser-2 directly represses transcription.

It localises to the nucleus. The protein resides in the chromosome. In terms of biological role, core component of nucleosome. Nucleosomes wrap and compact DNA into chromatin, limiting DNA accessibility to the cellular machineries which require DNA as a template. Histones thereby play a central role in transcription regulation, DNA repair, DNA replication and chromosomal stability. DNA accessibility is regulated via a complex set of post-translational modifications of histones, also called histone code, and nucleosome remodeling. The chain is Histone H2A, embryonic from Psammechinus miliaris (Green sea urchin).